Reading from the N-terminus, the 314-residue chain is DNA-directed RNA polymerase subunit alpha (314 aa).

Positions 1-228 (MIEIEKPNIE…EHLNIFVGLT (228 aa)) are alpha N-terminal domain (alpha-NTD). Residues 245–314 (KEKVLEMTIE…ELGLGLRNEE (70 aa)) are alpha C-terminal domain (alpha-CTD).

The protein belongs to the RNA polymerase alpha chain family. Homodimer. The RNAP catalytic core consists of 2 alpha, 1 beta, 1 beta' and 1 omega subunit. When a sigma factor is associated with the core the holoenzyme is formed, which can initiate transcription.

The enzyme catalyses RNA(n) + a ribonucleoside 5'-triphosphate = RNA(n+1) + diphosphate. In terms of biological role, DNA-dependent RNA polymerase catalyzes the transcription of DNA into RNA using the four ribonucleoside triphosphates as substrates. The polypeptide is DNA-directed RNA polymerase subunit alpha (Shouchella clausii (strain KSM-K16) (Alkalihalobacillus clausii)).